The sequence spans 408 residues: Glyceraldehyde-3-phosphate dehydrogenase, testis-specific (408 aa).

Residues 1–73 (MSKRDIVLTN…TPPPKMVSVA (73 aa)) form a testis-specific N-terminal extension region. The tract at residues 19–68 (QPCPVTRAPPPPEPKAEVEPQPQPEPTPVREEIKPPPPPLPPHPATPPPK) is disordered. Over residues 53 to 68 (PPPPPLPPHPATPPPK) the composition is skewed to pro residues. Residues 85–86 (RI), D106, K151, Y173, and S193 contribute to the NAD(+) site. Residues 223 to 225 (SCT), T254, 283 to 284 (TG), and R306 contribute to the D-glyceraldehyde 3-phosphate site. Catalysis depends on C224, which acts as the Nucleophile. Residue N388 participates in NAD(+) binding.

It belongs to the glyceraldehyde-3-phosphate dehydrogenase family. As to quaternary structure, homotetramer. Interacts with ARRB2; the interaction is detected in the nucleus upon OR1D2 stimulation. Testis specific.

The protein localises to the cytoplasm. It catalyses the reaction D-glyceraldehyde 3-phosphate + phosphate + NAD(+) = (2R)-3-phospho-glyceroyl phosphate + NADH + H(+). Its pathway is carbohydrate degradation; glycolysis; pyruvate from D-glyceraldehyde 3-phosphate: step 1/5. Its function is as follows. May play an important role in regulating the switch between different pathways for energy production during spermiogenesis and in the spermatozoon. Required for sperm motility and male fertility. The polypeptide is Glyceraldehyde-3-phosphate dehydrogenase, testis-specific (GAPDHS) (Homo sapiens (Human)).